The chain runs to 382 residues: MSGDSSGRRPEGRGRGRDPHRDRTRSRSRSRSPLSPGSRRGAAPERREAPERPGLEDTEPSDSGDEMIDPASLEEETDPSLCRQIRHQYRALINSVQQNREDILNASDKLTEVLEEANTLFNGVSRAREAVLDAHFLVLASDLGKEKAKQLRSDLNSFDMLRYVETLLTHMGVNPLEAEELIRDEDSSDLEFIVYDSWKISGKTAENTFNKTHTFHFLLGSIQGECPVPKPRIERPRKVRMIEEQQAMPAQLKRMEESHQEATEKEVERILGLLQTYFQEDPDTPMSFFDFVVDPHSFPRTVENIFHVSFIIRDGFARIRLDRDRLPVIEPVNINEESGGNTQIRNQAIIALSYRDWEEIVRTFEISEPVITSSQSQQRLSA.

Residues 1 to 21 (MSGDSSGRRPEGRGRGRDPHR) are compositionally biased toward basic and acidic residues. The disordered stretch occupies residues 1–80 (MSGDSSGRRP…ASLEEETDPS (80 aa)). Positions 31–41 (RSPLSPGSRRG) are enriched in low complexity. Residues 42–55 (AAPERREAPERPGL) are compositionally biased toward basic and acidic residues. The span at 56 to 78 (EDTEPSDSGDEMIDPASLEEETD) shows a compositional bias: acidic residues. The residue at position 342 (Thr342) is a Phosphothreonine. Position 374 is a phosphoserine (Ser374).

Belongs to the NSE4 family. Component of the SMC5-SMC6 complex which consists at least of SMC5, SMC6, NSMCE2, NSMCE1, NSMCE4A or EID3 and NSMCE3. NSMCE1, NSMCE4A or EID3 and NSMCE3 probably form a subcomplex that bridges the head domains of the SMC5:SMC6 heterodimer. Interacts with NSMCE3.

The protein localises to the nucleus. Its subcellular location is the chromosome. The protein resides in the telomere. Component of the SMC5-SMC6 complex, a complex involved in repair of DNA double-strand breaks by homologous recombination. The complex may promote sister chromatid homologous recombination by recruiting the SMC1-SMC3 cohesin complex to double-strand breaks. The complex is required for telomere maintenance via recombination and mediates sumoylation of shelterin complex (telosome) components. The protein is Non-structural maintenance of chromosomes element 4 homolog A (NSMCE4A) of Bos taurus (Bovine).